We begin with the raw amino-acid sequence, 397 residues long: MSKPFMFEKPFGMRDTLPEWYKTKKNICDQMTEEINLWGYDMIETPTLEYYETVGVVSAILDQQLFKLLDQQGNTLVLRPDMTAPIARLVASSLKDRAYPLRLAYQSNVYRAQQNEGGKPAEFEQLGVELIGDGTASADGEVIALMIAALKRAGLSEFKVAIGHVGYVNALLMDVVGNEQRADRLRRFLYEKNYVGYREHVKSLNLSTIDKSRLMNLLSLRGGRAAIEEARGLIQTEKGKTALAEMTKLYEVLESYGASEYVKFDLTLVLHMSYYTGVVFEGYGNRLGVPLCSGGRYDELLSKFHRPAQATGFGVRIDLLVEALNGEIISNGHEQTCILFSNERRFEAIELARKKRANGEAVVLQDLAGVTDVDAMSSNYQDVIYCIGTAGRGGEDA.

The protein belongs to the class-II aminoacyl-tRNA synthetase family. HisZ subfamily. Heteromultimer composed of HisG and HisZ subunits.

The protein localises to the cytoplasm. It participates in amino-acid biosynthesis; L-histidine biosynthesis; L-histidine from 5-phospho-alpha-D-ribose 1-diphosphate: step 1/9. Its function is as follows. Required for the first step of histidine biosynthesis. May allow the feedback regulation of ATP phosphoribosyltransferase activity by histidine. The polypeptide is ATP phosphoribosyltransferase regulatory subunit (Halalkalibacterium halodurans (strain ATCC BAA-125 / DSM 18197 / FERM 7344 / JCM 9153 / C-125) (Bacillus halodurans)).